Consider the following 868-residue polypeptide: LPS-assembly protein LptD (868 aa).

Residues 1-24 (MLKGIHKYLLMCFGTVLFTVQANA) form the signal peptide.

The protein belongs to the LptD family. Component of the lipopolysaccharide transport and assembly complex. Interacts with LptE and LptA.

It is found in the cell outer membrane. Functionally, together with LptE, is involved in the assembly of lipopolysaccharide (LPS) at the surface of the outer membrane. This chain is LPS-assembly protein LptD, found in Francisella tularensis subsp. novicida (strain U112).